The chain runs to 501 residues: Glucan endo-1,3-beta-glucosidase 3 (501 aa).

An N-terminal signal peptide occupies residues 1–18 (MAALLLLFLFLFASSALS). N-linked (GlcNAc...) asparagine glycans are attached at residues Asn88 and Asn107. Glu116 serves as the catalytic Proton donor. Asn171 and Asn253 each carry an N-linked (GlcNAc...) asparagine glycan. Glu263 functions as the Nucleophile in the catalytic mechanism. N-linked (GlcNAc...) asparagine glycosylation is found at Asn295, Asn353, and Asn357. A disulfide bridge connects residues Cys361 and Cys424. N-linked (GlcNAc...) asparagine glycans are attached at residues Asn451, Asn456, Asn457, and Asn466. Ser470 carries the GPI-anchor amidated serine lipid modification. A propeptide spans 471–501 (GCIPKYYHHPHASFGDLTLLSLLLIIALVFL) (removed in mature form).

This sequence belongs to the glycosyl hydrolase 17 family. In terms of processing, contains two additional disulfide bonds.

It localises to the cell membrane. It catalyses the reaction Hydrolysis of (1-&gt;3)-beta-D-glucosidic linkages in (1-&gt;3)-beta-D-glucans.. The chain is Glucan endo-1,3-beta-glucosidase 3 from Arabidopsis thaliana (Mouse-ear cress).